Here is an 844-residue protein sequence, read N- to C-terminus: Probable serine/threonine-protein kinase DDB_G0267566 (844 aa).

ANK repeat units lie at residues 335–367 (KGDT…NANI) and 371–400 (KHKV…KPFL). The 266-residue stretch at 508-773 (SELGKLIGKG…FEVFQKLKKV (266 aa)) folds into the Protein kinase domain. ATP-binding positions include 514–522 (IGKGANGKV) and K539. D634 functions as the Proton acceptor in the catalytic mechanism.

The protein belongs to the protein kinase superfamily. Ser/Thr protein kinase family.

The catalysed reaction is L-seryl-[protein] + ATP = O-phospho-L-seryl-[protein] + ADP + H(+). It catalyses the reaction L-threonyl-[protein] + ATP = O-phospho-L-threonyl-[protein] + ADP + H(+). This is Probable serine/threonine-protein kinase DDB_G0267566 from Dictyostelium discoideum (Social amoeba).